We begin with the raw amino-acid sequence, 247 residues long: ATP synthase subunit a, chloroplastic (247 aa).

Helical transmembrane passes span 38–58, 95–115, 134–154, 199–219, and 220–240; these read QVLITSWVVIAILLISTILVV, VPFIGTLFLFIFVSNWSGALL, INTTVALALLTSVAYFYAGIS, LVVVVLVSLVPLVVPIPVMFL, and GLFTSGIQALIFATLAAAYIG.

Belongs to the ATPase A chain family. F-type ATPases have 2 components, CF(1) - the catalytic core - and CF(0) - the membrane proton channel. CF(1) has five subunits: alpha(3), beta(3), gamma(1), delta(1), epsilon(1). CF(0) has four main subunits: a, b, b' and c.

The protein localises to the plastid. It localises to the chloroplast thylakoid membrane. Its function is as follows. Key component of the proton channel; it plays a direct role in the translocation of protons across the membrane. This is ATP synthase subunit a, chloroplastic from Pisum sativum (Garden pea).